The following is a 497-amino-acid chain: Glycerol kinase (497 aa).

Thr12 is a binding site for ADP. 3 residues coordinate ATP: Thr12, Thr13, and Ser14. Residue Thr12 coordinates sn-glycerol 3-phosphate. Arg16 provides a ligand contact to ADP. Residues Arg82, Glu83, Tyr134, and Asp243 each coordinate sn-glycerol 3-phosphate. 5 residues coordinate glycerol: Arg82, Glu83, Tyr134, Asp243, and Gln244. ADP is bound by residues Thr265 and Gly308. Positions 265, 308, 312, and 409 each coordinate ATP. 2 residues coordinate ADP: Gly409 and Asn413.

This sequence belongs to the FGGY kinase family.

It catalyses the reaction glycerol + ATP = sn-glycerol 3-phosphate + ADP + H(+). It functions in the pathway polyol metabolism; glycerol degradation via glycerol kinase pathway; sn-glycerol 3-phosphate from glycerol: step 1/1. Its activity is regulated as follows. Inhibited by fructose 1,6-bisphosphate (FBP). In terms of biological role, key enzyme in the regulation of glycerol uptake and metabolism. Catalyzes the phosphorylation of glycerol to yield sn-glycerol 3-phosphate. This chain is Glycerol kinase, found in Oleidesulfovibrio alaskensis (strain ATCC BAA-1058 / DSM 17464 / G20) (Desulfovibrio alaskensis).